Reading from the N-terminus, the 515-residue chain is Interferon alpha/beta receptor 2 (515 aa).

Positions Met-1–Gly-26 are cleaved as a signal peptide. The Extracellular segment spans residues Ile-27–Lys-243. Cystine bridges form between Cys-39/Cys-122 and Cys-85/Cys-93. Asn-58, Asn-87, Asn-116, Asn-188, and Asn-192 each carry an N-linked (GlcNAc...) asparagine glycan. Cys-207 and Cys-227 are oxidised to a cystine. A helical membrane pass occupies residues Ile-244–Leu-264. Over Lys-265–Arg-515 the chain is Cytoplasmic. 2 disordered regions span residues Tyr-318–Gly-418 and Glu-455–Arg-515. The residue at position 337 (Tyr-337) is a Phosphotyrosine. Acidic residues predominate over residues Pro-362–Val-375. The residue at position 400 (Ser-400) is a Phosphoserine. The interval Gly-418 to Glu-444 is mediates interaction with STAT2 (and required for the recruitment of USP18). Residues Asn-464–Gly-488 are compositionally biased toward polar residues. Ser-467 is modified (phosphoserine). Tyr-512 is subject to Phosphotyrosine.

The protein belongs to the type II cytokine receptor family. As to quaternary structure, heterodimer with IFNAR1; forming the receptor for type I interferon. Interacts with JAK1. Interacts with the transcriptional factors STAT1 and STAT2. Interacts with USP18; indirectly via STAT2, it negatively regulates the assembly of the ternary interferon-IFNAR1-IFNAR2 complex and therefore type I interferon signaling. Post-translationally, phosphorylated on tyrosine residues upon interferon binding. Phosphorylation at Tyr-337 or Tyr-512 are sufficient to mediate interferon dependent activation of STAT1, STAT2 and STAT3 leading to antiproliferative effects on many different cell types. Glycosylated. Isoform 3 is detected in the urine (at protein level). Expressed in blood cells. Expressed in lymphoblastoid and fibrosarcoma cell lines.

The protein localises to the cell membrane. It is found in the secreted. Together with IFNAR1, forms the heterodimeric receptor for type I interferons (including interferons alpha, beta, epsilon, omega and kappa). Type I interferon binding activates the JAK-STAT signaling cascade, resulting in transcriptional activation or repression of interferon-regulated genes that encode the effectors of the interferon response. Mechanistically, type I interferon-binding brings the IFNAR1 and IFNAR2 subunits into close proximity with one another, driving their associated Janus kinases (JAKs) (TYK2 bound to IFNAR1 and JAK1 bound to IFNAR2) to cross-phosphorylate one another. The activated kinases phosphorylate specific tyrosine residues on the intracellular domains of IFNAR1 and IFNAR2, forming docking sites for the STAT transcription factors (STAT1, STAT2 and STAT). STAT proteins are then phosphorylated by the JAKs, promoting their translocation into the nucleus to regulate expression of interferon-regulated genes. Its function is as follows. Potent inhibitor of type I IFN receptor activity. This Homo sapiens (Human) protein is Interferon alpha/beta receptor 2 (IFNAR2).